A 255-amino-acid polypeptide reads, in one-letter code: 3-dehydroquinate dehydratase (255 aa).

3-dehydroquinate-binding positions include 47–49 (EWR) and R83. Catalysis depends on H144, which acts as the Proton donor/acceptor. K171 (schiff-base intermediate with substrate) is an active-site residue. 3-dehydroquinate is bound by residues R214, S233, and Q237.

The protein belongs to the type-I 3-dehydroquinase family. Homodimer or homotetramer.

It catalyses the reaction 3-dehydroquinate = 3-dehydroshikimate + H2O. Its pathway is metabolic intermediate biosynthesis; chorismate biosynthesis; chorismate from D-erythrose 4-phosphate and phosphoenolpyruvate: step 3/7. In terms of biological role, involved in the third step of the chorismate pathway, which leads to the biosynthesis of aromatic amino acids. Catalyzes the cis-dehydration of 3-dehydroquinate (DHQ) and introduces the first double bond of the aromatic ring to yield 3-dehydroshikimate. The reaction involves the formation of an imine intermediate between the keto group of 3-dehydroquinate and the epsilon-amino group of Lys-170 at the active site. The sequence is that of 3-dehydroquinate dehydratase from Clostridioides difficile (strain 630) (Peptoclostridium difficile).